A 406-amino-acid chain; its full sequence is Probable UDP-arabinose 4-epimerase 3 (406 aa).

At 1–26 the chain is on the cytoplasmic side; it reads MIPLNRRASQTRGGMEYFDARRKPHN. A helical; Signal-anchor for type II membrane protein transmembrane segment spans residues 27–44; it reads VGKVIAALVLTTLCIFIL. The Lumenal portion of the chain corresponds to 45 to 406; sequence KQSPGFGGSS…KSHPRGYGSN (362 aa). An NAD(+)-binding site is contributed by 65–96; it reads HVLVTGGAGYIGSHASLRLLKDNYRVTIVDNL. The Proton acceptor role is filled by Tyr213.

It belongs to the NAD(P)-dependent epimerase/dehydratase family. The cofactor is NAD(+).

It localises to the golgi apparatus. The protein localises to the golgi stack membrane. The enzyme catalyses UDP-beta-L-arabinopyranose = UDP-alpha-D-xylose. It participates in nucleotide-sugar biosynthesis; UDP-L-arabinose biosynthesis; UDP-L-arabinose from UDP-alpha-D-xylose: step 1/1. The protein operates within cell wall biogenesis; cell wall polysaccharide biosynthesis. The polypeptide is Probable UDP-arabinose 4-epimerase 3 (UEL-3) (Oryza sativa subsp. japonica (Rice)).